The primary structure comprises 289 residues: Bifunctional protein FolD (289 aa).

NADP(+) contacts are provided by residues 166–168 (GRS), Ser-191, and Ile-232.

It belongs to the tetrahydrofolate dehydrogenase/cyclohydrolase family. As to quaternary structure, homodimer.

The enzyme catalyses (6R)-5,10-methylene-5,6,7,8-tetrahydrofolate + NADP(+) = (6R)-5,10-methenyltetrahydrofolate + NADPH. It carries out the reaction (6R)-5,10-methenyltetrahydrofolate + H2O = (6R)-10-formyltetrahydrofolate + H(+). Its pathway is one-carbon metabolism; tetrahydrofolate interconversion. Its function is as follows. Catalyzes the oxidation of 5,10-methylenetetrahydrofolate to 5,10-methenyltetrahydrofolate and then the hydrolysis of 5,10-methenyltetrahydrofolate to 10-formyltetrahydrofolate. The polypeptide is Bifunctional protein FolD (Synechococcus sp. (strain JA-3-3Ab) (Cyanobacteria bacterium Yellowstone A-Prime)).